Reading from the N-terminus, the 142-residue chain is Hemoglobin subunit alpha-4 (142 aa).

Residues 2-142 (TLTDSDKAAI…VATVLTSKYR (141 aa)) form the Globin domain. Histidine 59 contacts O2. Histidine 88 lines the heme b pocket.

The protein belongs to the globin family. Heterotetramer of two alpha chains and two beta chains. In terms of tissue distribution, red blood cells.

This is a larval (tadpole) alpha-globin. This is Hemoglobin subunit alpha-4 (hba4) from Xenopus laevis (African clawed frog).